The sequence spans 189 residues: HTH-type transcriptional regulator Hpr (189 aa).

The region spanning 12 to 156 (ALLYSHKIVQ…ISAIVRRLYG (145 aa)) is the HTH marR-type domain. The segment at residues 62–85 (ISEIAKYGVMHVSTAFNFSKKLED) is a DNA-binding region (H-T-H motif).

In terms of assembly, homodimer.

Its function is as follows. Negative regulator of protease production and sporulation. The protein is HTH-type transcriptional regulator Hpr of Exiguobacterium sibiricum (strain DSM 17290 / CCUG 55495 / CIP 109462 / JCM 13490 / 255-15).